The following is a 239-amino-acid chain: Ion-translocating oxidoreductase complex subunit E (239 aa).

5 consecutive transmembrane segments (helical) span residues 41-61 (LGLG…VSLV), 71-91 (LPAF…LMQA), 95-115 (ELYQ…VILG), 130-150 (SFDG…LGGL), and 184-204 (GFLL…LIAL).

This sequence belongs to the NqrDE/RnfAE family. As to quaternary structure, the complex is composed of six subunits: RnfA, RnfB, RnfC, RnfD, RnfE and RnfG.

It localises to the cell inner membrane. Its function is as follows. Part of a membrane-bound complex that couples electron transfer with translocation of ions across the membrane. The protein is Ion-translocating oxidoreductase complex subunit E of Pseudomonas paraeruginosa (strain DSM 24068 / PA7) (Pseudomonas aeruginosa (strain PA7)).